The chain runs to 306 residues: Homoserine kinase (306 aa).

84-94 (PAGLGLGSSGA) provides a ligand contact to ATP.

Belongs to the GHMP kinase family. Homoserine kinase subfamily.

Its subcellular location is the cytoplasm. It carries out the reaction L-homoserine + ATP = O-phospho-L-homoserine + ADP + H(+). It participates in amino-acid biosynthesis; L-threonine biosynthesis; L-threonine from L-aspartate: step 4/5. Its function is as follows. Catalyzes the ATP-dependent phosphorylation of L-homoserine to L-homoserine phosphate. The protein is Homoserine kinase of Sulfolobus acidocaldarius (strain ATCC 33909 / DSM 639 / JCM 8929 / NBRC 15157 / NCIMB 11770).